We begin with the raw amino-acid sequence, 488 residues long: Glutamyl-tRNA(Gln) amidotransferase subunit A (488 aa).

Active-site charge relay system residues include K77 and S152. The active-site Acyl-ester intermediate is the S176.

This sequence belongs to the amidase family. GatA subfamily. As to quaternary structure, heterotrimer of A, B and C subunits.

The enzyme catalyses L-glutamyl-tRNA(Gln) + L-glutamine + ATP + H2O = L-glutaminyl-tRNA(Gln) + L-glutamate + ADP + phosphate + H(+). Its function is as follows. Allows the formation of correctly charged Gln-tRNA(Gln) through the transamidation of misacylated Glu-tRNA(Gln) in organisms which lack glutaminyl-tRNA synthetase. The reaction takes place in the presence of glutamine and ATP through an activated gamma-phospho-Glu-tRNA(Gln). The chain is Glutamyl-tRNA(Gln) amidotransferase subunit A from Streptococcus agalactiae serotype III (strain NEM316).